The following is a 405-amino-acid chain: Deoxyguanosinetriphosphate triphosphohydrolase-like protein (405 aa).

The region spanning 75-219 (RLTHTIEVAQ…AAIADDIAYN (145 aa)) is the HD domain.

It belongs to the dGTPase family. Type 2 subfamily.

The polypeptide is Deoxyguanosinetriphosphate triphosphohydrolase-like protein (Rhizobium leguminosarum bv. trifolii (strain WSM2304)).